A 188-amino-acid chain; its full sequence is 3-deoxy-D-manno-octulosonate 8-phosphate phosphatase KdsC (188 aa).

The Mg(2+) site is built by Asp32 and Asp34. Substrate is bound by residues Asp34, 55–59 (NVRDG), Arg63, Arg78, Arg86, and Lys102. Asp125 lines the Mg(2+) pocket.

Homotetramer. Requires Mg(2+) as cofactor. Co(2+) is required as a cofactor.

The enzyme catalyses 3-deoxy-alpha-D-manno-2-octulosonate-8-phosphate + H2O = 3-deoxy-alpha-D-manno-oct-2-ulosonate + phosphate. The protein operates within carbohydrate biosynthesis; 3-deoxy-D-manno-octulosonate biosynthesis; 3-deoxy-D-manno-octulosonate from D-ribulose 5-phosphate: step 3/3. Its pathway is bacterial outer membrane biogenesis; lipopolysaccharide biosynthesis. Inhibited by calcium, cadmium, mercury, and copper ions. In terms of biological role, catalyzes the hydrolysis of 3-deoxy-D-manno-octulosonate 8-phosphate (KDO 8-P) to 3-deoxy-D-manno-octulosonate (KDO) and inorganic phosphate. The protein is 3-deoxy-D-manno-octulosonate 8-phosphate phosphatase KdsC of Escherichia coli (strain B / BL21-DE3).